We begin with the raw amino-acid sequence, 281 residues long: Very long chain fatty acid elongase 7 (281 aa).

Alanine 2 carries the post-translational modification N-acetylalanine. The Lumenal portion of the chain corresponds to 2-27; it reads AFSDLTSRTVRFYDNWIKDADPRVED. Residues 28–48 traverse the membrane as a helical segment; the sequence is YLLMSSPLPQTIILGLYVYFV. The Cytoplasmic portion of the chain corresponds to 49–72; the sequence is TSLGPKLMENRKPFELKKAMITYN. Residues 73-93 traverse the membrane as a helical segment; it reads FFIVLFSVYMCYEFVMSGWGT. Topologically, residues 94 to 115 are lumenal; that stretch reads GYSFRCDIVDYSQSPRAMRMVH. A disulfide bridge connects residues cysteine 99 and cysteine 231. Residues 116-136 traverse the membrane as a helical segment; sequence TCWLYYFSKFIELLDTIFFVL. 3-oxoeicosanoyl-CoA is bound by residues lysine 124, arginine 137, lysine 139, glutamine 142, and histidine 147. The Cytoplasmic portion of the chain corresponds to 137 to 142; it reads RKKNSQ. Residues 143 to 162 form a helical membrane-spanning segment; that stretch reads VTFLHVFHHTIMPWTWWFGV. Residues 147 to 151 carry the HxxHH motif motif; the sequence is HVFHH. Catalysis depends on histidine 150, which acts as the Nucleophile. The Lumenal portion of the chain corresponds to 163-171; it reads KFAAGGLGT. The helical transmembrane segment at 172-194 threads the bilayer; it reads FHAFLNTAVHVVMYSYYGLCAMG. Tyrosine 187, lysine 204, threonine 208, and glutamine 211 together coordinate 3-oxoeicosanoyl-CoA. The Cytoplasmic portion of the chain corresponds to 195–206; sequence PAYQKYLWWKKH. Residues 207–227 traverse the membrane as a helical segment; that stretch reads LTSLQLVQFVLVTIHIGQIFF. Over 228–236 the chain is Lumenal; it reads MEDCNYQYP. A helical transmembrane segment spans residues 237 to 257; the sequence is VFLYIIMSYGCIFLLLFLHFW. Residues 258–281 are Cytoplasmic-facing; it reads YRAYTKGQRLPKTLENGNCKSKRH. Arginine 266 is a 3-oxoeicosanoyl-CoA binding site. Residues 277 to 281 carry the Di-lysine motif motif; it reads KSKRH.

It belongs to the ELO family. ELOVL7 subfamily. In terms of assembly, homodimer. Interacts with TECR.

The protein resides in the endoplasmic reticulum membrane. The enzyme catalyses a very-long-chain acyl-CoA + malonyl-CoA + H(+) = a very-long-chain 3-oxoacyl-CoA + CO2 + CoA. It catalyses the reaction eicosanoyl-CoA + malonyl-CoA + H(+) = 3-oxodocosanoyl-CoA + CO2 + CoA. It carries out the reaction (5Z,8Z,11Z,14Z)-eicosatetraenoyl-CoA + malonyl-CoA + H(+) = (7Z,10Z,13Z,16Z)-3-oxodocosatetraenoyl-CoA + CO2 + CoA. The catalysed reaction is (6Z,9Z,12Z)-octadecatrienoyl-CoA + malonyl-CoA + H(+) = (8Z,11Z,14Z)-3-oxoeicosatrienoyl-CoA + CO2 + CoA. The enzyme catalyses (9Z,12Z)-octadecadienoyl-CoA + malonyl-CoA + H(+) = (11Z,14Z)-3-oxoicosa-11,14-dienoyl-CoA + CO2 + CoA. It catalyses the reaction (9Z)-octadecenoyl-CoA + malonyl-CoA + H(+) = 3-oxo-(11Z)-eicosenoyl-CoA + CO2 + CoA. It carries out the reaction octadecanoyl-CoA + malonyl-CoA + H(+) = 3-oxoeicosanoyl-CoA + CO2 + CoA. The catalysed reaction is hexadecanoyl-CoA + malonyl-CoA + H(+) = 3-oxooctadecanoyl-CoA + CO2 + CoA. The enzyme catalyses (9Z,12Z,15Z)-octadecatrienoyl-CoA + malonyl-CoA + H(+) = (11Z,14Z,17Z)-3-oxoeicosatrienoyl-CoA + CO2 + CoA. It participates in lipid metabolism; fatty acid biosynthesis. In terms of biological role, catalyzes the first and rate-limiting reaction of the four reactions that constitute the long-chain fatty acids elongation cycle. This endoplasmic reticulum-bound enzymatic process allows the addition of 2 carbons to the chain of long- and very long-chain fatty acids (VLCFAs) per cycle. Condensing enzyme with higher activity toward C18 acyl-CoAs, especially C18:3(n-3) acyl-CoAs and C18:3(n-6)-CoAs. Also active toward C20:4-, C18:0-, C18:1-, C18:2- and C16:0-CoAs, and weakly toward C20:0-CoA. Little or no activity toward C22:0-, C24:0-, or C26:0-CoAs. May participate in the production of saturated and polyunsaturated VLCFAs of different chain lengths that are involved in multiple biological processes as precursors of membrane lipids and lipid mediators. In Mus musculus (Mouse), this protein is Very long chain fatty acid elongase 7.